Here is a 465-residue protein sequence, read N- to C-terminus: Trigger factor (465 aa).

The PPIase FKBP-type domain occupies glycine 163 to alanine 248. The segment at glutamate 431 to lysine 465 is disordered. The span at glutamate 443 to lysine 465 shows a compositional bias: basic and acidic residues.

The protein belongs to the FKBP-type PPIase family. Tig subfamily.

Its subcellular location is the cytoplasm. The catalysed reaction is [protein]-peptidylproline (omega=180) = [protein]-peptidylproline (omega=0). In terms of biological role, involved in protein export. Acts as a chaperone by maintaining the newly synthesized protein in an open conformation. Functions as a peptidyl-prolyl cis-trans isomerase. The chain is Trigger factor from Mesomycoplasma hyopneumoniae (strain 232) (Mycoplasma hyopneumoniae).